We begin with the raw amino-acid sequence, 495 residues long: UDP-N-acetylmuramoyl-L-alanyl-D-glutamate--2,6-diaminopimelate ligase (495 aa).

Residues leucine 27, serine 29, and 44 to 46 (HQT) contribute to the UDP-N-acetyl-alpha-D-muramoyl-L-alanyl-D-glutamate site. An ATP-binding site is contributed by 116-122 (GTNGKTT). UDP-N-acetyl-alpha-D-muramoyl-L-alanyl-D-glutamate is bound by residues asparagine 157, 158–159 (TT), serine 185, glutamine 191, and arginine 193. Lysine 225 carries the N6-carboxylysine modification. Meso-2,6-diaminopimelate-binding positions include arginine 390, 414-417 (DNPR), glycine 465, and glutamate 469. Residues 414–417 (DNPR) carry the Meso-diaminopimelate recognition motif motif.

It belongs to the MurCDEF family. MurE subfamily. The cofactor is Mg(2+). In terms of processing, carboxylation is probably crucial for Mg(2+) binding and, consequently, for the gamma-phosphate positioning of ATP.

The protein resides in the cytoplasm. The enzyme catalyses UDP-N-acetyl-alpha-D-muramoyl-L-alanyl-D-glutamate + meso-2,6-diaminopimelate + ATP = UDP-N-acetyl-alpha-D-muramoyl-L-alanyl-gamma-D-glutamyl-meso-2,6-diaminopimelate + ADP + phosphate + H(+). It functions in the pathway cell wall biogenesis; peptidoglycan biosynthesis. Catalyzes the addition of meso-diaminopimelic acid to the nucleotide precursor UDP-N-acetylmuramoyl-L-alanyl-D-glutamate (UMAG) in the biosynthesis of bacterial cell-wall peptidoglycan. This is UDP-N-acetylmuramoyl-L-alanyl-D-glutamate--2,6-diaminopimelate ligase from Sodalis glossinidius (strain morsitans).